Here is a 394-residue protein sequence, read N- to C-terminus: Lipoyl synthase, chloroplastic (394 aa).

A chloroplast-targeting transit peptide spans 1 to 36 (MMHHCSITKPTFSISISTQKLHHHSSKFLNLGFRIR). [4Fe-4S] cluster-binding residues include Cys-127, Cys-132, Cys-138, Cys-158, Cys-162, Cys-165, and Ser-373. Residues 141–362 (GGGDGVATAT…KTYGESIGFR (222 aa)) enclose the Radical SAM core domain.

This sequence belongs to the radical SAM superfamily. Lipoyl synthase family. Requires [4Fe-4S] cluster as cofactor. In terms of tissue distribution, expressed in roots, leaves and flowers.

It localises to the plastid. The protein resides in the chloroplast. The catalysed reaction is [[Fe-S] cluster scaffold protein carrying a second [4Fe-4S](2+) cluster] + N(6)-octanoyl-L-lysyl-[protein] + 2 oxidized [2Fe-2S]-[ferredoxin] + 2 S-adenosyl-L-methionine + 4 H(+) = [[Fe-S] cluster scaffold protein] + N(6)-[(R)-dihydrolipoyl]-L-lysyl-[protein] + 4 Fe(3+) + 2 hydrogen sulfide + 2 5'-deoxyadenosine + 2 L-methionine + 2 reduced [2Fe-2S]-[ferredoxin]. It functions in the pathway protein modification; protein lipoylation via endogenous pathway; protein N(6)-(lipoyl)lysine from octanoyl-[acyl-carrier-protein]: step 2/2. In terms of biological role, catalyzes the radical-mediated insertion of two sulfur atoms into the C-6 and C-8 positions of the octanoyl moiety bound to the lipoyl domains of lipoate-dependent enzymes, thereby converting the octanoylated domains into lipoylated derivatives. Together with LIP2P and LIP2P2 is essential for de novo plastidial protein lipoylation during seed development. In Arabidopsis thaliana (Mouse-ear cress), this protein is Lipoyl synthase, chloroplastic.